Reading from the N-terminus, the 345-residue chain is UDP-3-O-acylglucosamine N-acyltransferase (345 aa).

Catalysis depends on H237, which acts as the Proton acceptor.

Belongs to the transferase hexapeptide repeat family. LpxD subfamily. Homotrimer.

The catalysed reaction is a UDP-3-O-[(3R)-3-hydroxyacyl]-alpha-D-glucosamine + a (3R)-hydroxyacyl-[ACP] = a UDP-2-N,3-O-bis[(3R)-3-hydroxyacyl]-alpha-D-glucosamine + holo-[ACP] + H(+). It functions in the pathway bacterial outer membrane biogenesis; LPS lipid A biosynthesis. In terms of biological role, catalyzes the N-acylation of UDP-3-O-acylglucosamine using 3-hydroxyacyl-ACP as the acyl donor. Is involved in the biosynthesis of lipid A, a phosphorylated glycolipid that anchors the lipopolysaccharide to the outer membrane of the cell. This chain is UDP-3-O-acylglucosamine N-acyltransferase, found in Geobacter sp. (strain M21).